Reading from the N-terminus, the 217-residue chain is Adenylate kinase (217 aa).

10–15 serves as a coordination point for ATP; that stretch reads GAGKGT. The interval 30–59 is NMP; that stretch reads STGDMLRAQVKAGTALGLEAKKHMDAGGLV. AMP-binding positions include threonine 31, arginine 36, 57–59, 85–88, and glutamine 92; these read GLV and GFPR. The interval 122-159 is LID; it reads GRRAHLASGRTYHVKFNPPKVEGIDDVTGEPLVQRDDD. Residues arginine 123 and 132–133 each bind ATP; that span reads TY. Arginine 156 and arginine 167 together coordinate AMP. Residue glycine 203 participates in ATP binding.

Belongs to the adenylate kinase family. In terms of assembly, monomer.

Its subcellular location is the cytoplasm. It catalyses the reaction AMP + ATP = 2 ADP. The protein operates within purine metabolism; AMP biosynthesis via salvage pathway; AMP from ADP: step 1/1. In terms of biological role, catalyzes the reversible transfer of the terminal phosphate group between ATP and AMP. Plays an important role in cellular energy homeostasis and in adenine nucleotide metabolism. The sequence is that of Adenylate kinase from Dechloromonas aromatica (strain RCB).